The sequence spans 734 residues: Photosystem I P700 chlorophyll a apoprotein A2 (734 aa).

The next 8 helical transmembrane spans lie at 46-69, 135-158, 175-199, 273-291, 330-353, 369-395, 417-439, and 517-535; these read IFAS…FHVA, LYTG…LHLQ, LNHH…HVAI, IAHH…GHMY, LHFQ…QHMY, AALY…IFFV, AIIS…LYVH, and FLVH…LILV. The [4Fe-4S] cluster site is built by C559 and C568. A run of 2 helical transmembrane segments spans residues 575–596 and 643–665; these read AFYL…YWHW and LSVW…MFLI. H654, M662, and Y670 together coordinate chlorophyll a. W671 contacts phylloquinone. Residues 707–727 form a helical membrane-spanning segment; it reads LVGLAHFSVGYVLTYAAFLIA.

The protein belongs to the PsaA/PsaB family. As to quaternary structure, the PsaA/B heterodimer binds the P700 chlorophyll special pair and subsequent electron acceptors. PSI consists of a core antenna complex that captures photons, and an electron transfer chain that converts photonic excitation into a charge separation. The eukaryotic PSI reaction center is composed of at least 11 subunits. Requires P700 is a chlorophyll a/chlorophyll a' dimer, A0 is one or more chlorophyll a, A1 is one or both phylloquinones and FX is a shared 4Fe-4S iron-sulfur center. as cofactor.

The protein localises to the plastid. It is found in the chloroplast thylakoid membrane. It carries out the reaction reduced [plastocyanin] + hnu + oxidized [2Fe-2S]-[ferredoxin] = oxidized [plastocyanin] + reduced [2Fe-2S]-[ferredoxin]. PsaA and PsaB bind P700, the primary electron donor of photosystem I (PSI), as well as the electron acceptors A0, A1 and FX. PSI is a plastocyanin-ferredoxin oxidoreductase, converting photonic excitation into a charge separation, which transfers an electron from the donor P700 chlorophyll pair to the spectroscopically characterized acceptors A0, A1, FX, FA and FB in turn. Oxidized P700 is reduced on the lumenal side of the thylakoid membrane by plastocyanin. This Chlorokybus atmophyticus (Soil alga) protein is Photosystem I P700 chlorophyll a apoprotein A2.